Consider the following 182-residue polypeptide: Protein Syd (182 aa).

This sequence belongs to the Syd family.

Its subcellular location is the cell inner membrane. Functionally, interacts with the SecY protein in vivo. May bind preferentially to an uncomplexed state of SecY, thus functioning either as a chelating agent for excess SecY in the cell or as a regulatory factor that negatively controls the translocase function. The protein is Protein Syd of Aeromonas hydrophila subsp. hydrophila (strain ATCC 7966 / DSM 30187 / BCRC 13018 / CCUG 14551 / JCM 1027 / KCTC 2358 / NCIMB 9240 / NCTC 8049).